The primary structure comprises 237 residues: MVSAVLLIQKATPETITQFHDQLSNELPTLRGKWNFNFKIFRNNPYSIPQELAETATVAPESKWLYTLSPSYLSDSSISLINGKSVGVFTNLIKEEAGEHGHSVELSIPNSHLHKGATTDLNDPFDFFVAQKLQSLWTQRQLIRGDGGRIYELENGNLTIRTSNVFLHGNFRGLLVQIEINQNLCNVDDVSSFASTFETIRNKYGIPAGDLSCEVLDPKRLDTYADLIYQYSKILNF.

It belongs to the Mediator complex subunit 20 family. As to quaternary structure, component of the Mediator complex.

The protein resides in the nucleus. Its function is as follows. Component of the Mediator complex, a coactivator involved in the regulated transcription of nearly all RNA polymerase II-dependent genes. Mediator functions as a bridge to convey information from gene-specific regulatory proteins to the basal RNA polymerase II transcription machinery. Mediator is recruited to promoters by direct interactions with regulatory proteins and serves as a scaffold for the assembly of a functional preinitiation complex with RNA polymerase II and the general transcription factors. This chain is Mediator of RNA polymerase II transcription subunit 20 (SRB2), found in Scheffersomyces stipitis (strain ATCC 58785 / CBS 6054 / NBRC 10063 / NRRL Y-11545) (Yeast).